The chain runs to 317 residues: Putative carboxypeptidase RP402 (317 aa).

Catalysis depends on Ser-125, which acts as the Nucleophile. Catalysis depends on charge relay system residues Glu-225 and His-288.

This sequence belongs to the peptidase S66 family.

The chain is Putative carboxypeptidase RP402 from Rickettsia prowazekii (strain Madrid E).